Reading from the N-terminus, the 120-residue chain is uncharacterized protein (120 aa).

The helical transmembrane segment at 19–41 threads the bilayer; the sequence is YPELFITWCVMTYTFGVAGYMLG. A disordered region spans residues 57–78; it reads SKNAHPWEDTKSSSGKSDESLD. Residues 61–75 show a composition bias toward basic and acidic residues; the sequence is HPWEDTKSSSGKSDE.

It localises to the membrane. This is an uncharacterized protein from Schizosaccharomyces pombe (strain 972 / ATCC 24843) (Fission yeast).